Here is a 134-residue protein sequence, read N- to C-terminus: Holo-[acyl-carrier-protein] synthase (134 aa).

Mg(2+) is bound by residues Asp8 and Glu57.

This sequence belongs to the P-Pant transferase superfamily. AcpS family. Mg(2+) serves as cofactor.

The protein localises to the cytoplasm. The catalysed reaction is apo-[ACP] + CoA = holo-[ACP] + adenosine 3',5'-bisphosphate + H(+). Functionally, transfers the 4'-phosphopantetheine moiety from coenzyme A to a Ser of acyl-carrier-protein. The protein is Holo-[acyl-carrier-protein] synthase of Rhizobium leguminosarum bv. trifolii (strain WSM2304).